We begin with the raw amino-acid sequence, 457 residues long: F-box only protein 13 (457 aa).

Positions 64–110 constitute an F-box domain; it reads EFPMDDLNDDVLERVLSWLPTSCFFRMSSVCKRWKSSQTSKSFKLAC.

The polypeptide is F-box only protein 13 (FBX13) (Arabidopsis thaliana (Mouse-ear cress)).